The primary structure comprises 171 residues: MEIILIKPVRKLGKIGDILKVADGFGRNYLLPQKLAIRATEPNKELIVKQKHEFEAKDKQIREEVEKINALIKDQQLVFIRQTSNDGKLFGSVTNKEIADKLSENISYNISHSNIILDKQIKSTGIYTVEIRLHAELNAIVTVIVARSESEAQDYLREQKTETSEDLAELA.

This sequence belongs to the bacterial ribosomal protein bL9 family.

In terms of biological role, binds to the 23S rRNA. This Rickettsia conorii (strain ATCC VR-613 / Malish 7) protein is Large ribosomal subunit protein bL9.